The sequence spans 147 residues: Hemoglobin subunit beta (147 aa).

Val-2 carries the N-acetylvaline modification. The Globin domain occupies 3–147; the sequence is NLTSDEKTAV…VANALAHKYH (145 aa). The residue at position 45 (Ser-45) is a Phosphoserine. Lys-60 bears the N6-acetyllysine mark. Residue His-64 coordinates heme b. Lys-83 carries the post-translational modification N6-acetyllysine. A heme b-binding site is contributed by His-93. Residue Cys-94 is modified to S-nitrosocysteine. Residue Lys-145 is modified to N6-acetyllysine.

The protein belongs to the globin family. In terms of assembly, heterotetramer of two alpha chains and two beta chains. In terms of tissue distribution, red blood cells.

In terms of biological role, involved in oxygen transport from the lung to the various peripheral tissues. In Dasypus novemcinctus (Nine-banded armadillo), this protein is Hemoglobin subunit beta (HBB).